The sequence spans 272 residues: 4-hydroxy-tetrahydrodipicolinate reductase (272 aa).

NAD(+)-binding positions include 11-16 (GAGGRM) and E37. R38 provides a ligand contact to NADP(+). Residues 101 to 103 (GTT) and 125 to 128 (AANF) contribute to the NAD(+) site. Catalysis depends on H158, which acts as the Proton donor/acceptor. H159 lines the (S)-2,3,4,5-tetrahydrodipicolinate pocket. K162 functions as the Proton donor in the catalytic mechanism. 168 to 169 (GT) serves as a coordination point for (S)-2,3,4,5-tetrahydrodipicolinate.

The protein belongs to the DapB family. In terms of assembly, homotetramer.

The protein resides in the cytoplasm. It catalyses the reaction (S)-2,3,4,5-tetrahydrodipicolinate + NAD(+) + H2O = (2S,4S)-4-hydroxy-2,3,4,5-tetrahydrodipicolinate + NADH + H(+). The enzyme catalyses (S)-2,3,4,5-tetrahydrodipicolinate + NADP(+) + H2O = (2S,4S)-4-hydroxy-2,3,4,5-tetrahydrodipicolinate + NADPH + H(+). Its pathway is amino-acid biosynthesis; L-lysine biosynthesis via DAP pathway; (S)-tetrahydrodipicolinate from L-aspartate: step 4/4. Its function is as follows. Catalyzes the conversion of 4-hydroxy-tetrahydrodipicolinate (HTPA) to tetrahydrodipicolinate. The chain is 4-hydroxy-tetrahydrodipicolinate reductase from Edwardsiella ictaluri (strain 93-146).